The following is a 426-amino-acid chain: UDP-N-acetylglucosamine 1-carboxyvinyltransferase (426 aa).

Residue 24–25 (KN) coordinates phosphoenolpyruvate. Arginine 95 lines the UDP-N-acetyl-alpha-D-glucosamine pocket. Cysteine 119 (proton donor) is an active-site residue. Residue cysteine 119 is modified to 2-(S-cysteinyl)pyruvic acid O-phosphothioketal. UDP-N-acetyl-alpha-D-glucosamine contacts are provided by residues 124-128 (RPVDQ), aspartate 308, and valine 330.

It belongs to the EPSP synthase family. MurA subfamily.

It localises to the cytoplasm. It catalyses the reaction phosphoenolpyruvate + UDP-N-acetyl-alpha-D-glucosamine = UDP-N-acetyl-3-O-(1-carboxyvinyl)-alpha-D-glucosamine + phosphate. Its pathway is cell wall biogenesis; peptidoglycan biosynthesis. In terms of biological role, cell wall formation. Adds enolpyruvyl to UDP-N-acetylglucosamine. This chain is UDP-N-acetylglucosamine 1-carboxyvinyltransferase, found in Deinococcus radiodurans (strain ATCC 13939 / DSM 20539 / JCM 16871 / CCUG 27074 / LMG 4051 / NBRC 15346 / NCIMB 9279 / VKM B-1422 / R1).